The chain runs to 83 residues: Mitotic-spindle organizing protein 1 (83 aa).

It belongs to the MOZART1 family. As to quaternary structure, part of the gamma-tubulin complex.

It is found in the cytoplasm. Its subcellular location is the cytoskeleton. The protein resides in the microtubule organizing center. The protein localises to the spindle pole body. Functionally, required for gamma-tubulin complex recruitment to the microtubule organizing center (MTOC). This Botryotinia fuckeliana (strain B05.10) (Noble rot fungus) protein is Mitotic-spindle organizing protein 1.